The primary structure comprises 329 residues: GTPase Obg (329 aa).

Residues 1 to 159 (MQFIDQARIS…WPLQLELKLL (159 aa)) form the Obg domain. In terms of domain architecture, OBG-type G spans 160 to 328 (AEVGIIGLPN…MLDRVWSELG (169 aa)). ATP is bound by residues 166–173 (GLPNAGKS), 191–195 (FTTLI), 213–216 (DIPG), 280–283 (NKQE), and 309–311 (SAA). Mg(2+) is bound by residues serine 173 and threonine 193.

This sequence belongs to the TRAFAC class OBG-HflX-like GTPase superfamily. OBG GTPase family. In terms of assembly, monomer. The cofactor is Mg(2+).

It localises to the cytoplasm. Functionally, an essential GTPase which binds GTP, GDP and possibly (p)ppGpp with moderate affinity, with high nucleotide exchange rates and a fairly low GTP hydrolysis rate. Plays a role in control of the cell cycle, stress response, ribosome biogenesis and in those bacteria that undergo differentiation, in morphogenesis control. This chain is GTPase Obg, found in Synechococcus sp. (strain CC9311).